The sequence spans 261 residues: Small ribosomal subunit protein mS23 (261 aa).

The segment at 228-261 is disordered; that stretch reads EQRAAAFTGAPEIPSTEDSLGLEEGVEEKQPQQA.

Belongs to the mitochondrion-specific ribosomal protein mS23 family. In terms of assembly, component of the mitochondrial small ribosomal subunit.

The protein localises to the mitochondrion. The sequence is that of Small ribosomal subunit protein mS23 (rsm25) from Aspergillus oryzae (strain ATCC 42149 / RIB 40) (Yellow koji mold).